The chain runs to 432 residues: Acyl-CoA dehydrogenase AFT10-1 (432 aa).

It belongs to the acyl-CoA dehydrogenase family. Requires FAD as cofactor.

It participates in mycotoxin biosynthesis. In terms of biological role, acyl-CoA dehydrogenase; part of the gene clusters that mediate the biosynthesis of the host-selective toxins (HSTs) AF-toxins responsible for Alternaria black spot of strawberry disease by the strawberry pathotype. AF-toxin I and III are valine derivatives of 2,3-dyhydroxy-isovaleric acid and 2-hydroxy-isovaleric acid respectively, while AF II is an isoleucine derivative of 2-hydroxy-valeric acid. These derivatives are bound to a 9,10-epoxy-8-hydroxy-9-methyl-decatrienoic acid (EDA) moiety. On cellular level, AF-toxins affect plasma membrane of susceptible cells and cause a sudden increase in loss of K(+) after a few minutes of toxin treatment. The aldo-keto reductase AFTS1 catalyzes the conversion of 2-keto-isovaleric acid (2-KIV) to 2-hydroxy-isovaleric acid (2-HIV) by reduction of its ketone to an alcohol. The acyl-CoA ligase AFT1, the hydrolase AFT2 and the enoyl-CoA hydratases AFT3 and AFT6, but also the polyketide synthase AFT9, the acyl-CoA dehydrogenase AFT10, the cytochrome P450 monooxygenase AFT11 and the oxidoreductase AFT12 are all involved in the biosynthesis of the AK-, AF- and ACT-toxin common EDA structural moiety. The exact function of each enzyme, and of additional enzymes identified within the AF-toxin clusters have still to be determined. The sequence is that of Acyl-CoA dehydrogenase AFT10-1 from Alternaria alternata (Alternaria rot fungus).